The primary structure comprises 536 residues: Phosphoenolpyruvate carboxykinase (ATP) (536 aa).

Positions 61, 195, and 201 each coordinate substrate. Residues lysine 201, histidine 220, and 236–244 (GLSGTGKTT) each bind ATP. Residues lysine 201 and histidine 220 each contribute to the Mn(2+) site. Aspartate 257 serves as a coordination point for Mn(2+). The ATP site is built by glutamate 285, arginine 322, and threonine 447. Substrate is bound at residue arginine 322.

Belongs to the phosphoenolpyruvate carboxykinase (ATP) family. The cofactor is Mn(2+).

The protein resides in the cytoplasm. It catalyses the reaction oxaloacetate + ATP = phosphoenolpyruvate + ADP + CO2. The protein operates within carbohydrate biosynthesis; gluconeogenesis. In terms of biological role, involved in the gluconeogenesis. Catalyzes the conversion of oxaloacetate (OAA) to phosphoenolpyruvate (PEP) through direct phosphoryl transfer between the nucleoside triphosphate and OAA. This Rhizobium leguminosarum bv. trifolii (strain WSM2304) protein is Phosphoenolpyruvate carboxykinase (ATP).